Here is an 83-residue protein sequence, read N- to C-terminus: Small ribosomal subunit protein uS17 (83 aa).

Belongs to the universal ribosomal protein uS17 family. In terms of assembly, part of the 30S ribosomal subunit.

Functionally, one of the primary rRNA binding proteins, it binds specifically to the 5'-end of 16S ribosomal RNA. This is Small ribosomal subunit protein uS17 from Synechococcus sp. (strain RCC307).